Reading from the N-terminus, the 456-residue chain is CBL-interacting protein kinase 9 (456 aa).

Residues 27-282 (YELGKTIGEG…IAQILEDDWF (256 aa)) form the Protein kinase domain. Residues 33-41 (IGEGSFAKV) and Lys-56 contribute to the ATP site. Asp-150 acts as the Proton acceptor in catalysis. Residues 168–197 (DFGLSAFAPQTKEDGLLHTACGTPNYVAPE) are activation loop. Residues 318 to 343 (REKPESMNAFALISRSQGFNLGNLFE) form the NAF domain. Residues 351–380 (KRETSFTSQCTPQEIMSKIEEACGPLGFNV) are PPI.

The protein belongs to the protein kinase superfamily. CAMK Ser/Thr protein kinase family. SNF1 subfamily. Mn(2+) serves as cofactor.

It carries out the reaction L-seryl-[protein] + ATP = O-phospho-L-seryl-[protein] + ADP + H(+). The catalysed reaction is L-threonyl-[protein] + ATP = O-phospho-L-threonyl-[protein] + ADP + H(+). Functionally, CIPK serine-threonine protein kinases interact with CBL proteins. Binding of a CBL protein to the regulatory NAF domain of CIPK protein lead to the activation of the kinase in a calcium-dependent manner. The chain is CBL-interacting protein kinase 9 (CIPK9) from Oryza sativa subsp. japonica (Rice).